Consider the following 153-residue polypeptide: Troponin C (153 aa).

A1 carries the blocked amino end (Ala) modification. EF-hand domains follow at residues 10-45 (EQVQ…LGQT), 46-81 (FEEK…FLVE), 86-121 (AMQE…LDDK), and 122-153 (LTED…MMTG). Ca(2+) contacts are provided by D59, D61, S63, E65, E70, D99, D110, D135, D137, S139, T141, and E146.

It belongs to the troponin C family.

Functionally, troponin is the central regulatory protein of striated muscle contraction. Tn consists of three components: Tn-I which is the inhibitor of actomyosin ATPase, Tn-T which contains the binding site for tropomyosin and Tn-C. The binding of calcium to Tn-C abolishes the inhibitory action of Tn on actin filaments. The sequence is that of Troponin C from Tachypleus tridentatus (Japanese horseshoe crab).